Reading from the N-terminus, the 737-residue chain is Photosystem I P700 chlorophyll a apoprotein A2 (737 aa).

8 consecutive transmembrane segments (helical) span residues 46-69 (LFST…FHIA), 135-158 (LYQG…LHLQ), 175-199 (LNHH…HVAI), 273-291 (IAHH…GHMY), 333-356 (LHFQ…QHMY), 372-398 (AALY…IFFI), 420-442 (AIIS…LYVH), and 520-538 (FLVH…LILV). 2 residues coordinate [4Fe-4S] cluster: cysteine 562 and cysteine 571. 2 helical membrane passes run 578 to 599 (AFYL…YWHW) and 646 to 668 (LAVW…MFLI). Chlorophyll a-binding residues include histidine 657, methionine 665, and tyrosine 673. Residue tryptophan 674 participates in phylloquinone binding. Residues 710–730 (VVGLAHFSVGYVLTYAAFLIA) traverse the membrane as a helical segment.

This sequence belongs to the PsaA/PsaB family. The PsaA/B heterodimer binds the P700 chlorophyll special pair and subsequent electron acceptors. PSI consists of a core antenna complex that captures photons, and an electron transfer chain that converts photonic excitation into a charge separation. The cyanobacterial PSI reaction center is composed of one copy each of PsaA,B,C,D,E,F,I,J,K,L,M and X, and forms trimeric complexes. It depends on PSI electron transfer chain: 5 chlorophyll a, 1 chlorophyll a', 2 phylloquinones and 3 4Fe-4S clusters. PSI core antenna: 90 chlorophyll a, 22 carotenoids, 3 phospholipids and 1 galactolipid. P700 is a chlorophyll a/chlorophyll a' dimer, A0 is one or more chlorophyll a, A1 is one or both phylloquinones and FX is a shared 4Fe-4S iron-sulfur center. as a cofactor.

It is found in the cellular thylakoid membrane. It catalyses the reaction reduced [plastocyanin] + hnu + oxidized [2Fe-2S]-[ferredoxin] = oxidized [plastocyanin] + reduced [2Fe-2S]-[ferredoxin]. Its function is as follows. PsaA and PsaB bind P700, the primary electron donor of photosystem I (PSI), as well as the electron acceptors A0, A1 and FX. PSI is a plastocyanin/cytochrome c6-ferredoxin oxidoreductase, converting photonic excitation into a charge separation, which transfers an electron from the donor P700 chlorophyll pair to the spectroscopically characterized acceptors A0, A1, FX, FA and FB in turn. Oxidized P700 is reduced on the lumenal side of the thylakoid membrane by plastocyanin or cytochrome c6. The chain is Photosystem I P700 chlorophyll a apoprotein A2 from Parasynechococcus marenigrum (strain WH8102).